The chain runs to 237 residues: Uracil-DNA glycosylase (237 aa).

Catalysis depends on D77, which acts as the Proton acceptor.

It belongs to the uracil-DNA glycosylase (UDG) superfamily. UNG family.

The protein resides in the cytoplasm. The catalysed reaction is Hydrolyzes single-stranded DNA or mismatched double-stranded DNA and polynucleotides, releasing free uracil.. Its function is as follows. Excises uracil residues from the DNA which can arise as a result of misincorporation of dUMP residues by DNA polymerase or due to deamination of cytosine. The protein is Uracil-DNA glycosylase of Acinetobacter baylyi (strain ATCC 33305 / BD413 / ADP1).